The following is a 644-amino-acid chain: Prolyl 3,4-dihydroxylase TPA1 (644 aa).

Residues 141 to 247 form the Fe2OG dioxygenase domain; the sequence is SKTDMSINTY…RLSIQGWYHI (107 aa). Fe cation is bound by residues H159 and D161. Residue Y173 participates in 2-oxoglutarate binding. Fe cation is bound at residue H227. R238 provides a ligand contact to 2-oxoglutarate. S607 carries the post-translational modification Phosphoserine.

This sequence belongs to the TPA1 family. Monomer and homodimer. Interacts with FRK1, eRF1 (SUP1), eRF3 (SUP35) and polyadenylate-binding protein PAB1. Interacts with ETT1. Fe(2+) is required as a cofactor. It depends on L-ascorbate as a cofactor.

The protein resides in the nucleus. The enzyme catalyses [ribosomal protein uS12]-L-proline + 2-oxoglutarate + O2 = [ribosomal protein uS12]-(3S)-3-hydroxy-L-proline + succinate + CO2. It carries out the reaction [ribosomal protein uS12]-(3S)-3-hydroxy-L-proline + 2-oxoglutarate + O2 = [ribosomal protein uS12]-(3S)-3,4-dihydroxy-L-proline + succinate + CO2. In terms of biological role, prolyl 3,4-dihydroxylase that catalyzes 3,4-dihydroxylation of 'Pro-64' of small ribosomal subunit uS12 (RPS23A and RPS23B), thereby regulating protein translation termination efficiency. Part of a messenger ribonucleoprotein (mRNP) complex at the 3'-UTR of mRNAs. It associates specifically with components of the translation termination complex and is involved in both translation termination and in regulation of normal mRNA decay through translation termination-coupled poly(A) shortening. The chain is Prolyl 3,4-dihydroxylase TPA1 from Saccharomyces cerevisiae (strain ATCC 204508 / S288c) (Baker's yeast).